The primary structure comprises 788 residues: Endonuclease MutS2 (788 aa).

332 to 339 (GPNTGGKT) provides a ligand contact to ATP. In terms of domain architecture, Smr spans 713-788 (VDLRGMDAEE…GTGVTVVELK (76 aa)).

Belongs to the DNA mismatch repair MutS family. MutS2 subfamily. In terms of assembly, homodimer. Binds to stalled ribosomes, contacting rRNA.

Its function is as follows. Endonuclease that is involved in the suppression of homologous recombination and thus may have a key role in the control of bacterial genetic diversity. Acts as a ribosome collision sensor, splitting the ribosome into its 2 subunits. Detects stalled/collided 70S ribosomes which it binds and splits by an ATP-hydrolysis driven conformational change. Acts upstream of the ribosome quality control system (RQC), a ribosome-associated complex that mediates the extraction of incompletely synthesized nascent chains from stalled ribosomes and their subsequent degradation. Probably generates substrates for RQC. The polypeptide is Endonuclease MutS2 (Clostridium botulinum (strain Kyoto / Type A2)).